The chain runs to 614 residues: Probable glutamate--tRNA ligase, cytoplasmic (614 aa).

130–132 (RFA) provides a ligand contact to L-glutamate. The short motif at 135-144 (PSGCLHIGHL) is the 'HIGH' region element. His-140 is a binding site for ATP. Residues Asp-166, 303 to 307 (YDFVC), and Arg-321 contribute to the L-glutamate site. ATP is bound by residues Glu-324 and 359–363 (VLSKR). Positions 359–363 (VLSKR) match the 'KMSKS' region motif.

Belongs to the class-I aminoacyl-tRNA synthetase family. Glutamate--tRNA ligase type 2 subfamily.

It is found in the cytoplasm. The catalysed reaction is tRNA(Glu) + L-glutamate + ATP = L-glutamyl-tRNA(Glu) + AMP + diphosphate. This Vairimorpha ceranae (strain BRL01) (Microsporidian parasite) protein is Probable glutamate--tRNA ligase, cytoplasmic.